We begin with the raw amino-acid sequence, 532 residues long: Cytokinin dehydrogenase 8 (532 aa).

A signal peptide spans 1–26 (MELKAMYLYAAVLAVLLCSSVNFIQS). Residues 51–238 (VSDAPFAVMR…TRARIPLQLA (188 aa)) enclose the FAD-binding PCMH-type domain. Residues Ala-87, Gly-89, and Gly-91 each contribute to the FAD site. A Pros-8alpha-FAD histidine modification is found at His-92. Residues Ser-93, Gln-97, Asp-162, Thr-167, Ser-173, Ile-177, and Ile-228 each contribute to the FAD site. The N-linked (GlcNAc...) asparagine glycan is linked to Asn-420. Residues Tyr-482 and Gln-520 each coordinate FAD.

Belongs to the oxygen-dependent FAD-linked oxidoreductase family. Monomer. It depends on FAD as a cofactor.

The protein localises to the secreted. It localises to the extracellular space. The catalysed reaction is N(6)-dimethylallyladenine + A + H2O = 3-methyl-2-butenal + adenine + AH2. Its function is as follows. Catalyzes the oxidation of cytokinins, a family of N(6)-substituted adenine derivatives that are plant hormones, where the substituent is an isopentenyl group. The polypeptide is Cytokinin dehydrogenase 8 (CKX8) (Oryza sativa subsp. indica (Rice)).